The following is a 138-amino-acid chain: Nucleoside diphosphate kinase (138 aa).

ATP-binding residues include lysine 10, phenylalanine 58, arginine 86, threonine 92, arginine 103, and asparagine 113. The Pros-phosphohistidine intermediate role is filled by histidine 116.

The protein belongs to the NDK family. Homotetramer. Mg(2+) serves as cofactor.

Its subcellular location is the cytoplasm. The catalysed reaction is a 2'-deoxyribonucleoside 5'-diphosphate + ATP = a 2'-deoxyribonucleoside 5'-triphosphate + ADP. It catalyses the reaction a ribonucleoside 5'-diphosphate + ATP = a ribonucleoside 5'-triphosphate + ADP. In terms of biological role, major role in the synthesis of nucleoside triphosphates other than ATP. The ATP gamma phosphate is transferred to the NDP beta phosphate via a ping-pong mechanism, using a phosphorylated active-site intermediate. The sequence is that of Nucleoside diphosphate kinase from Actinobacillus pleuropneumoniae serotype 5b (strain L20).